The following is a 142-amino-acid chain: MGMMQEFREFAVKGNVVDLAVGVIIGGAFGKIVDSVVNDLIMPVVGLVFGKLDFSNLFVVLGSVPPGTAMTLDALKKAGVPVFAYGNFITVAVNFIILAFIIFMMVKQINRLRREAPAAPAPAPVTPEDIVLLREIRDSLKR.

3 helical membrane-spanning segments follow: residues 10-30, 40-60, and 86-106; these read FAVK…GAFG, LIMP…LFVV, and GNFI…FMMV.

Belongs to the MscL family. As to quaternary structure, homopentamer.

Its subcellular location is the cell inner membrane. Channel that opens in response to stretch forces in the membrane lipid bilayer. May participate in the regulation of osmotic pressure changes within the cell. This chain is Large-conductance mechanosensitive channel, found in Delftia acidovorans (strain DSM 14801 / SPH-1).